The following is a 193-amino-acid chain: Probable nicotinate-nucleotide adenylyltransferase (193 aa).

The protein belongs to the NadD family.

It carries out the reaction nicotinate beta-D-ribonucleotide + ATP + H(+) = deamido-NAD(+) + diphosphate. It functions in the pathway cofactor biosynthesis; NAD(+) biosynthesis; deamido-NAD(+) from nicotinate D-ribonucleotide: step 1/1. Its function is as follows. Catalyzes the reversible adenylation of nicotinate mononucleotide (NaMN) to nicotinic acid adenine dinucleotide (NaAD). This is Probable nicotinate-nucleotide adenylyltransferase from Borreliella afzelii (strain PKo) (Borrelia afzelii).